Consider the following 387-residue polypeptide: Protein arginine N-methyltransferase 1 (387 aa).

Residues 1 to 60 (MDQRKGSGSDANGGLAEATASRLRFEDPDEVMEENPAAAAATVGAEEEGGEGGGGEEVIG) form a disordered region. The segment covering 34–44 (ENPAAAAATVG) has biased composition (low complexity). An SAM-dependent MTase PRMT-type domain is found at 66 to 387 (ADYYFDSYSH…VSRTQHYKMR (322 aa)). Residues His-79, Arg-88, Gly-112, Glu-134, and Glu-163 each coordinate S-adenosyl-L-methionine. Residues Glu-178 and Glu-187 contribute to the active site.

It belongs to the class I-like SAM-binding methyltransferase superfamily. Protein arginine N-methyltransferase family.

The protein resides in the nucleus. It catalyses the reaction L-arginyl-[protein] + S-adenosyl-L-methionine = N(omega)-methyl-L-arginyl-[protein] + S-adenosyl-L-homocysteine + H(+). It carries out the reaction L-arginyl-[protein] + 2 S-adenosyl-L-methionine = N(omega),N(omega)-dimethyl-L-arginyl-[protein] + 2 S-adenosyl-L-homocysteine + 2 H(+). Arginine methyltransferase that methylates (mono and asymmetric dimethylation) the guanidino nitrogens of arginyl residues present in target proteins. This chain is Protein arginine N-methyltransferase 1 (PRMT1), found in Oryza sativa subsp. indica (Rice).